Here is a 130-residue protein sequence, read N- to C-terminus: S-adenosylmethionine decarboxylase proenzyme (130 aa).

Serine 63 acts as the Schiff-base intermediate with substrate; via pyruvic acid in catalysis. The residue at position 63 (serine 63) is a Pyruvic acid (Ser); by autocatalysis. Histidine 68 (proton acceptor; for processing activity) is an active-site residue. Cysteine 83 (proton donor; for catalytic activity) is an active-site residue.

Belongs to the prokaryotic AdoMetDC family. Type 1 subfamily. Heterotetramer of two alpha and two beta chains arranged as a dimer of alpha/beta heterodimers. Pyruvate serves as cofactor. Post-translationally, is synthesized initially as an inactive proenzyme. Formation of the active enzyme involves a self-maturation process in which the active site pyruvoyl group is generated from an internal serine residue via an autocatalytic post-translational modification. Two non-identical subunits are generated from the proenzyme in this reaction, and the pyruvate is formed at the N-terminus of the alpha chain, which is derived from the carboxyl end of the proenzyme. The post-translation cleavage follows an unusual pathway, termed non-hydrolytic serinolysis, in which the side chain hydroxyl group of the serine supplies its oxygen atom to form the C-terminus of the beta chain, while the remainder of the serine residue undergoes an oxidative deamination to produce ammonia and the pyruvoyl group blocking the N-terminus of the alpha chain.

The catalysed reaction is S-adenosyl-L-methionine + H(+) = S-adenosyl 3-(methylsulfanyl)propylamine + CO2. The protein operates within amine and polyamine biosynthesis; S-adenosylmethioninamine biosynthesis; S-adenosylmethioninamine from S-adenosyl-L-methionine: step 1/1. In terms of biological role, catalyzes the decarboxylation of S-adenosylmethionine to S-adenosylmethioninamine (dcAdoMet), the propylamine donor required for the synthesis of the polyamines spermine and spermidine from the diamine putrescine. The protein is S-adenosylmethionine decarboxylase proenzyme of Thermosipho melanesiensis (strain DSM 12029 / CIP 104789 / BI429).